The chain runs to 562 residues: F-box and WD repeat domain-containing 11-A (562 aa).

Positions 87–136 (GSFDKEKDLCIQLFDQWSESDQVEFVEHLIARMCHYQHGHINSYLKPMLQ) are homodimerization domain D. The region spanning 149-187 (DHIAENILSFLDARSLCSAELVCREWQRVISDGMLWKKL) is the F-box domain. WD repeat units follow at residues 256-295 (RSEN…CLKV), 296-335 (LTGH…VLNT), 336-375 (LIHH…DISL), 379-418 (LVGH…FVRT), 419-458 (LNGH…CLRV), 459-491 (LEGH…WDLQ), and 508-538 (LVEH…LIWD).

In terms of assembly, self-associates. Component of the SCF(FBXW11) complex.

The protein localises to the cytoplasm. Its subcellular location is the nucleus. Its pathway is protein modification; protein ubiquitination. Functionally, substrate recognition component of a SCF (SKP1-CUL1-F-box protein) E3 ubiquitin-protein ligase complex which mediates the ubiquitination and subsequent proteasomal degradation of target proteins. Probably recognizes and binds to phosphorylated target proteins: the interaction with substrates requires the phosphorylation of the two serine residues in the substrates' destruction motif D-S-G-X(2,3,4)-S. SCF(FBXW11) mediates the ubiquitination of phosphorylated CTNNB1 and participates in Wnt signaling regulation. Participates in Wnt signaling regulation, and plays a role in eye and jaw development. SCF(FBXW11) plays a key role in NF-kappa-B activation by mediating ubiquitination of phosphorylated NFKBIA, leading to its degradation by the proteasome, thereby allowing the associated NF-kappa-B complex to translocate into the nucleus and to activate transcription. The sequence is that of F-box and WD repeat domain-containing 11-A from Danio rerio (Zebrafish).